A 478-amino-acid polypeptide reads, in one-letter code: D(1B) dopamine receptor (478 aa).

The Extracellular portion of the chain corresponds to 1–38 (MLPPGRNGTAHRARLGLQRQLAQVDAPGGSAAPLGPAQ). Asn-7 carries an N-linked (GlcNAc...) asparagine glycan. A helical membrane pass occupies residues 39-64 (VVTAGLLTLLIVWTLLGNVLVCAAIV). Over 65 to 75 (RSRHLRAKMTN) the chain is Cytoplasmic. Residues 76 to 102 (IFIVSLAVSDLFVALLVMPWKAVAEVA) form a helical membrane-spanning segment. At 103–111 (GYWPFGAFC) the chain is on the extracellular side. A disulfide bridge connects residues Cys-111 and Cys-211. The chain crosses the membrane as a helical span at residues 112-134 (DIWVAFDIMCSTASILNLCIISV). Residues 135-153 (DRYWAISRPFRYERKMTQR) are Cytoplasmic-facing. A helical membrane pass occupies residues 154–179 (VALVMVALAWTLSILISFIPVQLNWH). Topologically, residues 180–215 (RDKAGSQGREGLLSNETPWEEGWELDGRTENCDSSL) are extracellular. A helical membrane pass occupies residues 216-240 (NRTYAISSSLISFYIPVAIMIVTYT). Topologically, residues 241–289 (RIYRIAQVQIRRISSLERAAEHAQSCRSRGACEPDPSLRASIKKETKVF) are cytoplasmic. The chain crosses the membrane as a helical span at residues 290 to 317 (KTLSVIMGVFVCCWLPFFILNCMVPFCS). The Extracellular segment spans residues 318 to 335 (SGDAQGPRTGFPCVSETT). The chain crosses the membrane as a helical span at residues 336 to 357 (FDIFVWFGWANSSLNPIIYAFN). At 358 to 478 (ADFRKVFAQL…LTPNCFHKTA (121 aa)) the chain is on the cytoplasmic side. The S-palmitoyl cysteine moiety is linked to residue Cys-370. A disordered region spans residues 416–446 (GDREVGEEEEAEEEGPFDHMSQISPTTPDGD). The segment covering 420–430 (VGEEEEAEEEG) has biased composition (acidic residues).

This sequence belongs to the G-protein coupled receptor 1 family.

It localises to the cell membrane. Dopamine receptor whose activity is mediated by G proteins which activate adenylyl cyclase. The protein is D(1B) dopamine receptor (Drd5) of Mus musculus (Mouse).